A 217-amino-acid polypeptide reads, in one-letter code: 8-oxoguanine DNA glycosylase/AP lyase (217 aa).

Active-site residues include Lys-138 and Asp-157.

It belongs to the type-2 OGG1 family.

The enzyme catalyses 2'-deoxyribonucleotide-(2'-deoxyribose 5'-phosphate)-2'-deoxyribonucleotide-DNA = a 3'-end 2'-deoxyribonucleotide-(2,3-dehydro-2,3-deoxyribose 5'-phosphate)-DNA + a 5'-end 5'-phospho-2'-deoxyribonucleoside-DNA + H(+). In terms of biological role, catalyzes the excision of an oxidatively damaged form of guanine (7,8-dihydro-8-oxoguanine = 8-oxoG) from DNA. Also cleaves the DNA backbone at apurinic/apyrimidinic sites (AP sites). The polypeptide is 8-oxoguanine DNA glycosylase/AP lyase (Fusobacterium nucleatum subsp. nucleatum (strain ATCC 25586 / DSM 15643 / BCRC 10681 / CIP 101130 / JCM 8532 / KCTC 2640 / LMG 13131 / VPI 4355)).